A 188-amino-acid chain; its full sequence is Peptidyl-tRNA hydrolase (188 aa).

Tyr14 is a binding site for tRNA. The active-site Proton acceptor is the His19. Tyr64, Asn66, and Asn112 together coordinate tRNA.

The protein belongs to the PTH family. As to quaternary structure, monomer.

It is found in the cytoplasm. It catalyses the reaction an N-acyl-L-alpha-aminoacyl-tRNA + H2O = an N-acyl-L-amino acid + a tRNA + H(+). Functionally, hydrolyzes ribosome-free peptidyl-tRNAs (with 1 or more amino acids incorporated), which drop off the ribosome during protein synthesis, or as a result of ribosome stalling. Its function is as follows. Catalyzes the release of premature peptidyl moieties from peptidyl-tRNA molecules trapped in stalled 50S ribosomal subunits, and thus maintains levels of free tRNAs and 50S ribosomes. Releases Ala-tailed nascent peptides from stalled 50S ribosomal subunits. Non-templated Ala tailing occurs as part of the ribosome quality control (RQC) pathway. In the absence of Ala tails significantly less peptide release occurs. The Ala tail facilitates the interaction of Pth with the nascent peptide-tRNA ester bond as well as promoting nascent chain degradation; 3 Ala residues suffice to stimulate peptide release from stalled 50S ribosomal subunits. Complements a temperature-sensitive pth mutation in E.coli. The sequence is that of Peptidyl-tRNA hydrolase from Bacillus subtilis (strain 168).